We begin with the raw amino-acid sequence, 427 residues long: MKLQINAGPLKGNVTVPGDKSISHRALIFGSIAEGKTEIKGLLKSQDVQRTLVALRHLGVTIEESDQKVIIQGKGFSGLTAPDSPLDMGNSGTSLRLLAGLLSGQDFPVQFFGDASLSQRPMDRIVIPLREMGARVEGQGPKHLPPITVLGSSQLTAINYQMPLASAQVKSAILLAALQTKGQTQVFEKAVTRNHTEVMIKQFGGEIFQSGKEIRIIGPQTLKGQSLTIPGDISSAAFWIVAALIIPGSAISIKNVGINPTRTGIIDLVKKMGGAIELTDRDDINQSATIHVSYSKLKGTRIAGEMIPRLIDELPIIALLATQAEGTTVVQDAQELRVKETDRIQVVTSLLRKMGADIEEKTDGFVIKGKTELHSCQADAFLDHRIGMMVAIAALLVKTGEMILNGEEAIQTSYPQFFKDLESLQHD.

Residues lysine 20, serine 21, and arginine 25 each contribute to the 3-phosphoshikimate site. Lysine 20 contacts phosphoenolpyruvate. Positions 92 and 120 each coordinate phosphoenolpyruvate. Residues serine 166, glutamine 168, aspartate 312, and lysine 339 each coordinate 3-phosphoshikimate. Glutamine 168 is a binding site for phosphoenolpyruvate. The active-site Proton acceptor is aspartate 312. The phosphoenolpyruvate site is built by arginine 343 and arginine 385.

This sequence belongs to the EPSP synthase family. As to quaternary structure, monomer.

Its subcellular location is the cytoplasm. The enzyme catalyses 3-phosphoshikimate + phosphoenolpyruvate = 5-O-(1-carboxyvinyl)-3-phosphoshikimate + phosphate. The protein operates within metabolic intermediate biosynthesis; chorismate biosynthesis; chorismate from D-erythrose 4-phosphate and phosphoenolpyruvate: step 6/7. Functionally, catalyzes the transfer of the enolpyruvyl moiety of phosphoenolpyruvate (PEP) to the 5-hydroxyl of shikimate-3-phosphate (S3P) to produce enolpyruvyl shikimate-3-phosphate and inorganic phosphate. The sequence is that of 3-phosphoshikimate 1-carboxyvinyltransferase from Streptococcus uberis (strain ATCC BAA-854 / 0140J).